A 209-amino-acid chain; its full sequence is Protein-L-isoaspartate O-methyltransferase (209 aa).

Residue S59 is part of the active site.

It belongs to the methyltransferase superfamily. L-isoaspartyl/D-aspartyl protein methyltransferase family. In terms of assembly, monomer.

The protein localises to the cytoplasm. The enzyme catalyses [protein]-L-isoaspartate + S-adenosyl-L-methionine = [protein]-L-isoaspartate alpha-methyl ester + S-adenosyl-L-homocysteine. Functionally, catalyzes the methyl esterification of L-isoaspartyl residues in peptides and proteins that result from spontaneous decomposition of normal L-aspartyl and L-asparaginyl residues. It plays a role in the repair and/or degradation of damaged proteins. The polypeptide is Protein-L-isoaspartate O-methyltransferase (pcm) (Helicobacter pylori (strain J99 / ATCC 700824) (Campylobacter pylori J99)).